A 108-amino-acid polypeptide reads, in one-letter code: Competence protein ComGC (108 aa).

The N-terminal stretch at 1-13 is a signal peptide; sequence MKKMMTFLKKAKV. The interval 14-39 is may be involved in polymerization of ComGC; that stretch reads KAFTLVEMLVVLLIISVLFLLFVPNL. Phenylalanine 16 bears the N-methylphenylalanine mark. A helical membrane pass occupies residues 16–36; it reads FTLVEMLVVLLIISVLFLLFV.

Belongs to the ComGC family. As to quaternary structure, the transformation pili are flexible filaments, consisting mainly of the major pilin ComGC and smaller amounts of the minor pilins, including at least ComGD, ComGF and ComGG, and perhaps ComGE. Homodimer. Forms higher-order multimers. Interacts with ComGG; the interaction is probably direct. Post-translationally, undergoes proteolytic cleavage.

Its subcellular location is the cell membrane. It localises to the cell surface. The protein resides in the fimbrium. The protein localises to the secreted. Its function is as follows. Major component of the type IV-like pilus (T4P) that plays a role in transformation. Transformation pili are dynamically extended and retracted, perhaps thereby promoting DNA uptake and transformation. Required for transformation. Required for DNA binding. The polypeptide is Competence protein ComGC (Streptococcus pneumoniae serotype 4 (strain ATCC BAA-334 / TIGR4)).